The sequence spans 548 residues: Thermosome subunit alpha (548 aa).

The tract at residues 527-548 (TKPEGGQGGGMPGGMGGMDMGM) is disordered. Residues 531 to 548 (GGQGGGMPGGMGGMDMGM) are compositionally biased toward gly residues.

The protein belongs to the TCP-1 chaperonin family. Forms a Heterooligomeric complex of two stacked eight-membered rings.

In terms of biological role, molecular chaperone; binds unfolded polypeptides in vitro, and has a weak ATPase activity. The polypeptide is Thermosome subunit alpha (thsA) (Thermococcus sp. (strain JCM 11816 / KS-1)).